The sequence spans 1582 residues: Dynein axonemal assembly factor 1 homolog (1582 aa).

LRR repeat units lie at residues 38 to 60 (RLND…DEYT), 61 to 82 (ELKS…TKLT), 83 to 104 (KLKC…EFNR), 105 to 126 (ELDT…GTDI), 129 to 150 (VLNT…AALV), and 154 to 175 (TLSV…KIFE). The LRRCT domain occupies 189-227 (PVVSRLPQYRKTLILACKELTYLDSRPVFPRDRACAEAW). Disordered stretches follow at residues 245-420 (AERR…SEMD), 560-587 (SSDV…VKSQ), 859-878 (FSKD…EDRR), 913-942 (DTGE…DDDA), 1073-1092 (SSNE…LVER), 1101-1137 (MQRM…MGEG), 1150-1218 (TEII…QAEG), 1305-1345 (KDNE…TAKD), 1358-1438 (LDPE…PYQT), 1484-1517 (EDSK…NPKN), and 1529-1548 (PSES…STEQ). The segment covering 313 to 327 (ESQASEHSTTSSTSA) has biased composition (low complexity). The segment covering 339–392 (HIAERISNRRVKPLEGRPKVLYDEAASGDEKAVTTTDSKKDSNAEDLPELKDIT) has biased composition (basic and acidic residues). The segment covering 409–420 (TLLQSDSGSEMD) has biased composition (polar residues). The segment covering 572-582 (ESDEEPTEEEM) has biased composition (acidic residues). The span at 928–942 (SDSESEKEVEEDDDA) shows a compositional bias: acidic residues. Composition is skewed to basic and acidic residues over residues 1078 to 1092 (LEAK…LVER) and 1103 to 1125 (RMKE…KEEE). Over residues 1166–1178 (EGGAQQEEGGAQS) the composition is skewed to low complexity. Composition is skewed to basic and acidic residues over residues 1321 to 1335 (PKEE…ETET), 1398 to 1427 (SALK…KDTE), and 1484 to 1514 (EDSK…RPEN). The span at 1529–1540 (PSESLEDTEATE) shows a compositional bias: acidic residues.

Belongs to the DNAAF1 family.

It localises to the cell projection. It is found in the cilium. In terms of biological role, cilium-specific protein required for cilia structures. The polypeptide is Dynein axonemal assembly factor 1 homolog (dtr) (Drosophila pseudoobscura pseudoobscura (Fruit fly)).